A 1151-amino-acid chain; its full sequence is PPi-type phosphoenolpyruvate carboxykinase 1 (1151 aa).

Positions 1083–1129 form a coiled coil; the sequence is RQKLEVAKLNKDLAYLNKTIAEKPRLAETLNKQIAAVKEELQYVSSE.

The protein belongs to the PPi-type phosphoenolpyruvate carboxykinase family. As to quaternary structure, monomer and trimer; forms heterotrimers with PEPCK2 and PEPCK3.

Its subcellular location is the cytoplasm. It is found in the cytosol. It catalyses the reaction oxaloacetate + diphosphate = phosphoenolpyruvate + phosphate + CO2. Its function is as follows. Inorganic pyrophosphate (PPi)-dependent phosphoenolpyruvate carboxykinase, which regulates the carbon flow of the central metabolism by fixing CO(2) to phosphoenolpyruvate to produce oxaloacetate. Can also produce pyruvate and diphosphate from phosphoenolpyruvate and phosphate. The sequence is that of PPi-type phosphoenolpyruvate carboxykinase 1 from Entamoeba histolytica (strain ATCC 30459 / HM-1:IMSS / ABRM).